The following is a 667-amino-acid chain: Probable endo-1,3(4)-beta-glucanase AFLA_105200 (667 aa).

The first 24 residues, 1-24 (MSSSSFVWTVGSIALSSLITPTIA), serve as a signal peptide directing secretion. A GH16 domain is found at 25–288 (DGSGSRYQLT…WAGGVFGDSG (264 aa)). The N-linked (GlcNAc...) asparagine glycan is linked to Asn63. Residue Glu144 is the Nucleophile of the active site. Residue Glu149 is the Proton donor of the active site. 2 stretches are compositionally biased toward polar residues: residues 354–363 (VPSVTSTPIL) and 379–394 (ATSS…QTSV). Disordered regions lie at residues 354-427 (VPSV…ADAV) and 448-646 (GTIQ…AGAS). 3 stretches are compositionally biased toward low complexity: residues 395–427 (AGAE…ADAV), 448–483 (GTIQ…SQEP), and 574–622 (APTS…EATA). The span at 623–637 (PTETDSGASTGTNPE) shows a compositional bias: polar residues. A lipid anchor (GPI-anchor amidated glycine) is attached at Gly644. Residues 645 to 667 (ASKSVGISGLAGIVCGIAMAMLA) constitute a propeptide, removed in mature form.

This sequence belongs to the glycosyl hydrolase 16 family.

The protein localises to the cell membrane. The catalysed reaction is Endohydrolysis of (1-&gt;3)- or (1-&gt;4)-linkages in beta-D-glucans when the glucose residue whose reducing group is involved in the linkage to be hydrolyzed is itself substituted at C-3.. Functionally, mixed-linked glucanase involved in the degradation of complex natural cellulosic substrates. In Aspergillus flavus (strain ATCC 200026 / FGSC A1120 / IAM 13836 / NRRL 3357 / JCM 12722 / SRRC 167), this protein is Probable endo-1,3(4)-beta-glucanase AFLA_105200.